The chain runs to 473 residues: Ribulose bisphosphate carboxylase large chain (473 aa).

Residues Asn116 and Thr166 each contribute to the substrate site. Lys168 acts as the Proton acceptor in catalysis. Lys170 is a substrate binding site. Residues Lys194, Asp196, and Glu197 each coordinate Mg(2+). Position 194 is an N6-carboxylysine (Lys194). His287 functions as the Proton acceptor in the catalytic mechanism. Substrate-binding residues include Arg288, His320, and Ser372.

Belongs to the RuBisCO large chain family. Type I subfamily. In terms of assembly, heterohexadecamer of 8 large chains and 8 small chains. Mg(2+) is required as a cofactor.

It catalyses the reaction 2 (2R)-3-phosphoglycerate + 2 H(+) = D-ribulose 1,5-bisphosphate + CO2 + H2O. The catalysed reaction is D-ribulose 1,5-bisphosphate + O2 = 2-phosphoglycolate + (2R)-3-phosphoglycerate + 2 H(+). In terms of biological role, ruBisCO catalyzes two reactions: the carboxylation of D-ribulose 1,5-bisphosphate, the primary event in carbon dioxide fixation, as well as the oxidative fragmentation of the pentose substrate. Both reactions occur simultaneously and in competition at the same active site. The chain is Ribulose bisphosphate carboxylase large chain from Nitrosomonas europaea (strain ATCC 19718 / CIP 103999 / KCTC 2705 / NBRC 14298).